The following is a 476-amino-acid chain: UDP-N-acetylmuramate--L-alanine ligase (476 aa).

Residue 115–121 coordinates ATP; that stretch reads GTHGKTT.

Belongs to the MurCDEF family.

It is found in the cytoplasm. It catalyses the reaction UDP-N-acetyl-alpha-D-muramate + L-alanine + ATP = UDP-N-acetyl-alpha-D-muramoyl-L-alanine + ADP + phosphate + H(+). It functions in the pathway cell wall biogenesis; peptidoglycan biosynthesis. Functionally, cell wall formation. This is UDP-N-acetylmuramate--L-alanine ligase from Paramagnetospirillum magneticum (strain ATCC 700264 / AMB-1) (Magnetospirillum magneticum).